The sequence spans 172 residues: Adenine phosphoribosyltransferase (172 aa).

The protein belongs to the purine/pyrimidine phosphoribosyltransferase family. Homodimer.

The protein resides in the cytoplasm. The enzyme catalyses AMP + diphosphate = 5-phospho-alpha-D-ribose 1-diphosphate + adenine. It participates in purine metabolism; AMP biosynthesis via salvage pathway; AMP from adenine: step 1/1. Catalyzes a salvage reaction resulting in the formation of AMP, that is energically less costly than de novo synthesis. In Levilactobacillus brevis (strain ATCC 367 / BCRC 12310 / CIP 105137 / JCM 1170 / LMG 11437 / NCIMB 947 / NCTC 947) (Lactobacillus brevis), this protein is Adenine phosphoribosyltransferase.